A 200-amino-acid chain; its full sequence is Glycerol-3-phosphate acyltransferase (200 aa).

The next 5 helical transmembrane spans lie at 1-21 (MLLSSLLLLALGYLLGSMPNG), 53-73 (GPALVVFLLDVGKGALAVLLA), 81-101 (WVQVLAGLAALAGHIWPVWLG), 114-134 (MFLGLAWPVGLACLGLFMAVI), and 139-159 (IVSLSSVVAAIGLPVLMLTSG).

Belongs to the PlsY family. In terms of assembly, probably interacts with PlsX.

Its subcellular location is the cell inner membrane. The enzyme catalyses an acyl phosphate + sn-glycerol 3-phosphate = a 1-acyl-sn-glycero-3-phosphate + phosphate. Its pathway is lipid metabolism; phospholipid metabolism. Catalyzes the transfer of an acyl group from acyl-phosphate (acyl-PO(4)) to glycerol-3-phosphate (G3P) to form lysophosphatidic acid (LPA). This enzyme utilizes acyl-phosphate as fatty acyl donor, but not acyl-CoA or acyl-ACP. In Synechococcus sp. (strain CC9902), this protein is Glycerol-3-phosphate acyltransferase.